A 327-amino-acid polypeptide reads, in one-letter code: Serine/threonine-protein phosphatase 4 regulatory subunit ppfr-4 (327 aa).

The stretch at 141 to 185 (KLAVEEIRRLKLERHKKKQELKMAELRIQKQLEAVSIDEQNLREL) forms a coiled coil. The tract at residues 271–327 (KFGHNPQNAPQSSAPAGAEAQESEEEVDDDEARAKAMRWDEYKDDHRRGWGNMHNKG) is disordered. Residues 275 to 284 (NPQNAPQSSA) show a composition bias toward polar residues. Acidic residues predominate over residues 291-301 (QESEEEVDDDE). Residues 302–318 (ARAKAMRWDEYKDDHRR) are compositionally biased toward basic and acidic residues.

In terms of assembly, serine/threonine-protein phosphatase 4 (PP4) occurs in different assemblies of the catalytic and one or more regulatory subunits. The catalytic subunit is likely to be pph-4.1.

In terms of biological role, probable regulatory subunit of serine/threonine-protein phosphatase PP4 which may play a role in meiosis and embryonic mitosis. Probably in association with catalytic subunit pph-4.1, regulates microtubule severing during oocyte meiosis II by dephosphorylating and likely activating mei-1, a component of the katanin microtubule severing complex. The polypeptide is Serine/threonine-protein phosphatase 4 regulatory subunit ppfr-4 (Caenorhabditis elegans).